The primary structure comprises 401 residues: MKNLVINCGSSSIKYQFIDMKDETVLAKGLVERIGIKGSVITHKVNGEKYVTETPMEDHKKAIKLVLDALLNDEYGVIKNIDEISAVGHRIVHGGEKYANSVLIDEDVMKSIEDCVSLAPLHNPPHIIGINACKELMPNVPMVAVFDTAFHQTIPDYAYMYAIPYEYYDKYKIRKYGFHGTSHKYVSRTAAEFIGKKVEDLKMVVCHMGNGASITAVENGKSVDTSMGFTPLGGLAMGTRSGDMDPAVVTFLMDKLNINASEVNNLLNKKSGIEGLSGISSDMRDIKKGNYVDKDPKAMLAYSVFNYKIKQFIGSYTAVMNGLDCLVFTGGIGENSFENRREICKNMDYLGIKIDDKKNDETMGIPMDISAEGSKVRVLVIPTNEELMIARDTKDIVGKLK.

Asparagine 7 serves as a coordination point for Mg(2+). Lysine 14 is a binding site for ATP. Arginine 90 lines the substrate pocket. Aspartate 147 functions as the Proton donor/acceptor in the catalytic mechanism. ATP is bound by residues 207-211, 282-284, and 331-335; these read HMGNG, DMR, and GIGEN. A Mg(2+)-binding site is contributed by glutamate 385.

Belongs to the acetokinase family. Homodimer. Mg(2+) serves as cofactor. It depends on Mn(2+) as a cofactor.

The protein localises to the cytoplasm. The enzyme catalyses acetate + ATP = acetyl phosphate + ADP. Its pathway is metabolic intermediate biosynthesis; acetyl-CoA biosynthesis; acetyl-CoA from acetate: step 1/2. Functionally, catalyzes the formation of acetyl phosphate from acetate and ATP. Can also catalyze the reverse reaction. This Clostridium acetobutylicum (strain ATCC 824 / DSM 792 / JCM 1419 / IAM 19013 / LMG 5710 / NBRC 13948 / NRRL B-527 / VKM B-1787 / 2291 / W) protein is Acetate kinase.